An 82-amino-acid polypeptide reads, in one-letter code: Endocuticle structural glycoprotein ABD-5 (82 aa).

A Pyrrolidone carboxylic acid modification is found at Gln1. The Chitin-binding type R&amp;R domain maps to 18-82; that stretch reads LGQYNFAYRT…ENGYQPRVQS (65 aa).

Its function is as follows. Component of the soft endocuticle of migratory locust. This chain is Endocuticle structural glycoprotein ABD-5, found in Locusta migratoria (Migratory locust).